Consider the following 273-residue polypeptide: Octanoyltransferase (273 aa).

A BPL/LPL catalytic domain is found at 35 to 254; it reads DRVPDTCLLL…HLRDILENAE (220 aa). Residues 73–80, 184–186, and 197–199 contribute to the substrate site; these read RGGKITWH, AIG, and GFA. The active-site Acyl-thioester intermediate is the Cys215.

The protein belongs to the LipB family.

Its subcellular location is the cytoplasm. It catalyses the reaction octanoyl-[ACP] + L-lysyl-[protein] = N(6)-octanoyl-L-lysyl-[protein] + holo-[ACP] + H(+). It participates in protein modification; protein lipoylation via endogenous pathway; protein N(6)-(lipoyl)lysine from octanoyl-[acyl-carrier-protein]: step 1/2. In terms of biological role, catalyzes the transfer of endogenously produced octanoic acid from octanoyl-acyl-carrier-protein onto the lipoyl domains of lipoate-dependent enzymes. Lipoyl-ACP can also act as a substrate although octanoyl-ACP is likely to be the physiological substrate. The polypeptide is Octanoyltransferase (Streptomyces griseus subsp. griseus (strain JCM 4626 / CBS 651.72 / NBRC 13350 / KCC S-0626 / ISP 5235)).